A 412-amino-acid chain; its full sequence is Multifunctional CCA protein (412 aa).

The ATP site is built by Gly-8 and Arg-11. CTP is bound by residues Gly-8 and Arg-11. The Mg(2+) site is built by Asp-21 and Asp-23. ATP-binding residues include Arg-91, Arg-137, and Arg-140. Positions 91, 137, and 140 each coordinate CTP. The HD domain occupies 228–329 (TGIHTMMVLA…LKVFDKADAW (102 aa)).

This sequence belongs to the tRNA nucleotidyltransferase/poly(A) polymerase family. Bacterial CCA-adding enzyme type 1 subfamily. Monomer. Can also form homodimers and oligomers. Mg(2+) is required as a cofactor. Requires Ni(2+) as cofactor.

It carries out the reaction a tRNA precursor + 2 CTP + ATP = a tRNA with a 3' CCA end + 3 diphosphate. It catalyses the reaction a tRNA with a 3' CCA end + 2 CTP + ATP = a tRNA with a 3' CCACCA end + 3 diphosphate. Catalyzes the addition and repair of the essential 3'-terminal CCA sequence in tRNAs without using a nucleic acid template. Adds these three nucleotides in the order of C, C, and A to the tRNA nucleotide-73, using CTP and ATP as substrates and producing inorganic pyrophosphate. tRNA 3'-terminal CCA addition is required both for tRNA processing and repair. Also involved in tRNA surveillance by mediating tandem CCA addition to generate a CCACCA at the 3' terminus of unstable tRNAs. While stable tRNAs receive only 3'-terminal CCA, unstable tRNAs are marked with CCACCA and rapidly degraded. The polypeptide is Multifunctional CCA protein (Aeromonas hydrophila subsp. hydrophila (strain ATCC 7966 / DSM 30187 / BCRC 13018 / CCUG 14551 / JCM 1027 / KCTC 2358 / NCIMB 9240 / NCTC 8049)).